The chain runs to 246 residues: Proteasome subunit beta type-4 (246 aa).

A propeptide spanning residues 1–23 is cleaved from the precursor; it reads MTTFSVPIDNGDSMKIAEEESQR. Thr-24 acts as the Nucleophile in catalysis.

This sequence belongs to the peptidase T1B family. Component of the 20S core complex of the 26S proteasome. The 26S proteasome is composed of a core protease (CP), known as the 20S proteasome, capped at one or both ends by the 19S regulatory particle (RP/PA700). The 20S proteasome core is composed of 28 subunits that are arranged in four stacked rings, resulting in a barrel-shaped structure. The two end rings are each formed by seven alpha subunits, and the two central rings are each formed by seven beta subunits. The catalytic chamber with the active sites is on the inside of the barrel. Ubiquitous low levels, higher expression in siliques and flowers.

The protein resides in the cytoplasm. The protein localises to the nucleus. Functionally, non-catalytic component of the proteasome, a multicatalytic proteinase complex which is characterized by its ability to cleave peptides with Arg, Phe, Tyr, Leu, and Glu adjacent to the leaving group at neutral or slightly basic pH. The proteasome has an ATP-dependent proteolytic activity. The polypeptide is Proteasome subunit beta type-4 (PBG1) (Arabidopsis thaliana (Mouse-ear cress)).